Reading from the N-terminus, the 263-residue chain is Hydroxyethylthiazole kinase (263 aa).

Residue Met-39 participates in substrate binding. Residues Lys-115 and Thr-160 each coordinate ATP. Substrate is bound at residue Gly-187.

This sequence belongs to the Thz kinase family. It depends on Mg(2+) as a cofactor.

It catalyses the reaction 5-(2-hydroxyethyl)-4-methylthiazole + ATP = 4-methyl-5-(2-phosphooxyethyl)-thiazole + ADP + H(+). It functions in the pathway cofactor biosynthesis; thiamine diphosphate biosynthesis; 4-methyl-5-(2-phosphoethyl)-thiazole from 5-(2-hydroxyethyl)-4-methylthiazole: step 1/1. Catalyzes the phosphorylation of the hydroxyl group of 4-methyl-5-beta-hydroxyethylthiazole (THZ). This is Hydroxyethylthiazole kinase from Staphylococcus aureus (strain bovine RF122 / ET3-1).